Reading from the N-terminus, the 382-residue chain is Apolipoprotein A-IV (382 aa).

An N-terminal signal peptide occupies residues 1–20 (MFLKAVVLSLALVAVTGARA). 13 tandem repeats follow at residues 33–54 (DYFS…KSEL), 60–81 (TLFQ…KKLV), 82–103 (PFAT…EEIR), 115–136 (PHAT…QRLG), 137–158 (PFTG…RQLK), 159–180 (PYAE…ASVA), 181–202 (PYAD…GSLT), 203–224 (PYAE…RSLA), 225–246 (PYAQ…FQMK), 247–268 (KQAE…QKLV), 269–286 (PVAE…EGLQ), 287–308 (KSLL…LKVE), and 309–330 (PYGE…QKLG). The 13 X 22 AA approximate tandem repeats stretch occupies residues 33–330 (DYFSQLGSNA…QVEDLRQKLG (298 aa)). Positions 361-382 (EASQGQSQALPAQEKAQAPLEG) are disordered.

It belongs to the apolipoprotein A1/A4/E family. Homodimer. In terms of tissue distribution, secreted in plasma.

It is found in the secreted. In terms of biological role, may have a role in chylomicrons and VLDL secretion and catabolism. Required for efficient activation of lipoprotein lipase by ApoC-II; potent activator of LCAT. Apoa-IV is a major component of HDL and chylomicrons. The sequence is that of Apolipoprotein A-IV (APOA4) from Sus scrofa (Pig).